The following is a 396-amino-acid chain: Elongation factor Tu (396 aa).

The tr-type G domain occupies 10-206 (KPHVNVGTIG…ALDTYIPTPE (197 aa)). Positions 19-26 (GHVDHGKT) are G1. Residue 19 to 26 (GHVDHGKT) participates in GTP binding. T26 serves as a coordination point for Mg(2+). The tract at residues 60–64 (GITIN) is G2. Positions 81-84 (DCPG) are G3. GTP-binding positions include 81 to 85 (DCPGH) and 136 to 139 (NKCD). The tract at residues 136 to 139 (NKCD) is G4. Positions 174–176 (SAK) are G5.

This sequence belongs to the TRAFAC class translation factor GTPase superfamily. Classic translation factor GTPase family. EF-Tu/EF-1A subfamily. Monomer.

Its subcellular location is the cytoplasm. The catalysed reaction is GTP + H2O = GDP + phosphate + H(+). Functionally, GTP hydrolase that promotes the GTP-dependent binding of aminoacyl-tRNA to the A-site of ribosomes during protein biosynthesis. This Burkholderia vietnamiensis (strain G4 / LMG 22486) (Burkholderia cepacia (strain R1808)) protein is Elongation factor Tu.